A 309-amino-acid chain; its full sequence is Thioredoxin reductase (309 aa).

35–42 (EKQFPGGK) is a binding site for FAD. Cys-134 and Cys-137 are disulfide-bonded. An FAD-binding site is contributed by 277 to 286 (DIVDKNVRQI).

It belongs to the class-II pyridine nucleotide-disulfide oxidoreductase family. As to quaternary structure, homodimer. FAD serves as cofactor.

It is found in the cytoplasm. The catalysed reaction is [thioredoxin]-dithiol + NADP(+) = [thioredoxin]-disulfide + NADPH + H(+). In Ureaplasma parvum serovar 3 (strain ATCC 700970), this protein is Thioredoxin reductase (trxB).